An 824-amino-acid polypeptide reads, in one-letter code: Spindle-defective protein 2 (824 aa).

2 stretches are compositionally biased toward acidic residues: residues 16-27 (EIEDSPIDDNDN) and 35-44 (GDVELEEEEV). Residues 16–98 (EIEDSPIDDN…SRPASVMSDK (83 aa)) form a disordered region. The segment covering 59–70 (TNMTNPKVNDLT) has biased composition (polar residues). The span at 81-98 (SAASSRSASRPASVMSDK) shows a compositional bias: low complexity. Positions 111-131 (ENAIEEYTNQVFADENKADLL) form a coiled coil. Residues 189–252 (RAKPGANDNE…GQYQGPNFDL (64 aa)) form a disordered region. The span at 207–225 (NVPTTSDKSAFITSPMNST) shows a compositional bias: polar residues. A coiled-coil region spans residues 304-324 (NNKNQDLFAALEEARKRRAAQ). Disordered stretches follow at residues 342–372 (KPTSARHSGNVVSSTSNDNTTAASSKDLTTS) and 433–455 (NNGNVSLSHGRDGRDSVSSVRTM). Residues 349-366 (SGNVVSSTSNDNTTAASS) show a composition bias toward low complexity.

Interacts with sas-7 (via C-terminus); may be recruited to centrioles by sas-7.

The protein localises to the cytoplasm. The protein resides in the cytoskeleton. It is found in the microtubule organizing center. Its subcellular location is the centrosome. It localises to the centriole. Required both for centrosome duplication and maturation. Required for pericentriolar material (PCM) recruitment. The sequence is that of Spindle-defective protein 2 from Caenorhabditis elegans.